The sequence spans 299 residues: MVKYGLFLGCNISFNRPDVEVSMRSIFPALGIELDDLVGQSCCPTWGTMPSVDIVGWCAVAARNLALGEEKGIDLMTACNSCYGSLNEARHKMLTNPEIHRKVNEILATIGKRYEGKAKCRHVAWVLYKDVGLEKLKESIKYTLDGITVAVQPGCHFLWPSEVYPDKEEDPFNPKVLRELCEALGAEAPYYTKLIECCGMGALRSTDPEKSFKLVKEKMENIKEEIDADLIVTTCSSCLIQLDDAQERLRKEGKINFSIPVLHLVQVIALCMGFDPEKVAGICVTPRDEIIKRILENKR.

The protein belongs to the HdrB family. As to quaternary structure, the heterodisulfide reductase is composed of three subunits; HdlA, HdlB and HdlC. It forms a complex with the F420-non-reducing hydrogenase (Mvh), which provides the reducing equivalents to the heterodisulfide reductase.

Its subcellular location is the cytoplasm. Its function is as follows. Has oxidoreductase activity. The Hdl and Mvh subunits may together mediate electron transfer from hydrogen to an unidentified electron acceptor on the cytoplasmic side of the membrane. The sequence is that of Heterodisulfide reductase subunit B-like protein (hdlB) from Archaeoglobus profundus (strain DSM 5631 / JCM 9629 / NBRC 100127 / Av18).